Reading from the N-terminus, the 683-residue chain is FAD-binding monooxygenase ausC (683 aa).

N-linked (GlcNAc...) asparagine glycosylation is present at Asn-5. Residues 111–131 (ILIIGAGFGGLLFAVRLIQTG) form a helical membrane-spanning segment. FAD-binding positions include 150-153 (TWYW), 162-163 (DT), and Tyr-168. Position 160–162 (160–162 (MCD)) interacts with NADP(+). An N-linked (GlcNAc...) asparagine glycan is attached at Asn-286. NADP(+)-binding positions include 310-316 (TGASAVQ) and 333-334 (RT). Asn-525 and Asn-572 each carry an N-linked (GlcNAc...) asparagine glycan.

It belongs to the FAD-binding monooxygenase family. It depends on FAD as a cofactor.

The protein localises to the membrane. The enzyme catalyses preaustinoid A + AH2 + O2 = preaustinoid A1 + A + H2O. Its pathway is secondary metabolite biosynthesis; terpenoid biosynthesis. Functionally, FAD-binding monooxygenase; part of the gene cluster A that mediates the biosynthesis of austinol and dehydroaustinol, two fungal meroterpenoids. The first step of the pathway is the synthesis of 3,5-dimethylorsellinic acid by the polyketide synthase ausA. 3,5-dimethylorsellinic acid is then prenylated by the polyprenyl transferase ausN. Further epoxidation by the FAD-dependent monooxygenase ausM and cyclization by the probable terpene cyclase ausL lead to the formation of protoaustinoid A. Protoaustinoid A is then oxidized to spiro-lactone preaustinoid A3 by the combined action of the FAD-binding monooxygenases ausB and ausC, and the dioxygenase ausE. Acid-catalyzed keto-rearrangement and ring contraction of the tetraketide portion of preaustinoid A3 by ausJ lead to the formation of preaustinoid A4. The aldo-keto reductase ausK, with the help of ausH, is involved in the next step by transforming preaustinoid A4 into isoaustinone which is in turn hydroxylated by the P450 monooxygenase ausI to form austinolide. Finally, the cytochrome P450 monooxygenase ausG modifies austinolide to austinol. Austinol can be further modified to dehydroaustinol which forms a diffusible complex with diorcinol that initiates conidiation. Due to genetic rearrangements of the clusters and the subsequent loss of some enzymes, the end products of the Emericella nidulans austinoid biosynthesis clusters are austinol and dehydroaustinol, even if additional enzymes, such as the O-acetyltransferase ausQ and the cytochrome P450 monooxygenase ausR are still functional. The protein is FAD-binding monooxygenase ausC of Emericella nidulans (strain FGSC A4 / ATCC 38163 / CBS 112.46 / NRRL 194 / M139) (Aspergillus nidulans).